A 104-amino-acid polypeptide reads, in one-letter code: uncharacterized protein (104 aa).

The protein belongs to the BolA/IbaG family.

This is an uncharacterized protein from Buchnera aphidicola subsp. Acyrthosiphon pisum (strain APS) (Acyrthosiphon pisum symbiotic bacterium).